Consider the following 112-residue polypeptide: MDHPLPAGRLSPPWKLFADHLRLTVRLTPNGGRDAFDGIDTDSEGETYLGARVTAVPEKGKANKALIALVSKSVGVAKSSVSVISGETARKKILRIEGDPEDLARKLEVFLE.

The protein belongs to the UPF0235 family.

The chain is UPF0235 protein RHE_CH03912 from Rhizobium etli (strain ATCC 51251 / DSM 11541 / JCM 21823 / NBRC 15573 / CFN 42).